We begin with the raw amino-acid sequence, 532 residues long: Carboxypeptidase Y (532 aa).

An N-terminal signal peptide occupies residues 1-20 (MKAFTSLLCGLGLSTTLAKA). Positions 21–111 (ISLQRPLGLD…AIENYQLRVN (91 aa)) are cleaved as a propeptide — mediates translocation across the endoplasmic reticulum, renders the enzyme inactive during transit, and targets the molecule to the vacuole. The Vacuolar targeting signal signature appears at 24–27 (QRPL). N124 and N198 each carry an N-linked (GlcNAc...) (high mannose) asparagine glycan. Cystine bridges form between C167-C409, C304-C318, C328-C351, C335-C344, and C373-C379. S257 is a catalytic residue. N-linked (GlcNAc...) (high mannose) asparagine glycosylation is present at N279. D449 is a catalytic residue. Residue C452 participates in substrate binding. N479 is a glycosylation site (N-linked (GlcNAc...) (high mannose) asparagine). H508 is an active-site residue. M509 contacts substrate.

This sequence belongs to the peptidase S10 family. Enters the endoplasmic reticulum as an inactive zymogen and is modified by four N-linked core oligosaccharides, giving rise to a precursor known as P1 (67 kDa). As P1 transits through the Golgi, extension of its core oligosaccharides leads to the Golgi-modified P2 precursor (69 kDa). P2 is sorted away from secretory proteins at or beyond a late Golgi compartment and is subsequently delivered to the vacuole via a prevacuolar endosome-like compartment. Upon arrival in the vacuole, the N-terminal prosegment of P2 is cleaved by vacuolar proteases to yield the enzymatically active mature vacuolar form of CPY (61 kDa). Post-translationally, the four high mannose core N-glycans found in mature CPY are Man(11-15)GlcNAc(2) at Asn-124, Man(8-12)GlcNAc(2) at Asn-198, Man(9-14)GlcNAc(2) at Asn-279 and phosphorylated Man(12-17)GlcNAc(2) as well as Man(11-16)GlcNAc(2) at Asn-479.

It localises to the vacuole lumen. It carries out the reaction Release of a C-terminal amino acid with broad specificity.. With respect to regulation, inhibited by ZPCK. Vacuolar serine-type carboxypeptidase involved in degradation of small peptides. Digests preferentially peptides containing an aliphatic or hydrophobic residue in P1' position, as well as methionine, leucine or phenylalanine in P1 position of ester substrate. Also plays a role in breakdown of the autophagic body and the autophagosome-dependent protein synthesis. Plays a key role in phytochelatin (PC) synthesis from glutathione (GSH) by cleaving the Gly from GSH and form the PC-peptides of the structure (gamma-Glu-Cys)2-Gly. Also involved in resistance to xenobiotics via the degradation of glutathione-S-conjugates. This Saccharomyces cerevisiae (strain ATCC 204508 / S288c) (Baker's yeast) protein is Carboxypeptidase Y.